A 509-amino-acid polypeptide reads, in one-letter code: 3-ketoacyl-CoA synthase 11 (509 aa).

Transmembrane regions (helical) follow at residues 36-56 (LITHGMYLFLSPLVLVIAAQI) and 75-95 (LISVVVCSMLLVFLMTIYFMT). One can recognise an FAE domain in the interval 92–381 (YFMTRPRPVY…FFATLVGRKL (290 aa)). Active-site residues include Cys-236, His-315, His-399, His-403, and Asn-436.

Belongs to the thiolase-like superfamily. Chalcone/stilbene synthases family. In terms of tissue distribution, only expressed in guard cells. Expressed in siliques, flowers, leaves, stems, roots and seedlings.

It is found in the membrane. It catalyses the reaction a very-long-chain acyl-CoA + malonyl-CoA + H(+) = a very-long-chain 3-oxoacyl-CoA + CO2 + CoA. The protein operates within lipid metabolism; fatty acid biosynthesis. Active on both saturated and mono-unsaturated acyl chains C16 to C20. This is 3-ketoacyl-CoA synthase 11 from Arabidopsis thaliana (Mouse-ear cress).